Here is a 121-residue protein sequence, read N- to C-terminus: MTTEHVYSLPKSCRLRKADEFRAVLRHRTVFESLSLRLHIKLKPINDGYARIGLIVAKKIERKAVRRNRIKRLIREAFRKHRQVVQGMDCVMQLRRSVEPSDSARIYQEAVTLLHKAARQL.

Belongs to the RnpA family. Consists of a catalytic RNA component (M1 or rnpB) and a protein subunit.

The catalysed reaction is Endonucleolytic cleavage of RNA, removing 5'-extranucleotides from tRNA precursor.. Functionally, RNaseP catalyzes the removal of the 5'-leader sequence from pre-tRNA to produce the mature 5'-terminus. It can also cleave other RNA substrates such as 4.5S RNA. The protein component plays an auxiliary but essential role in vivo by binding to the 5'-leader sequence and broadening the substrate specificity of the ribozyme. The polypeptide is Ribonuclease P protein component (Nitrosomonas eutropha (strain DSM 101675 / C91 / Nm57)).